We begin with the raw amino-acid sequence, 217 residues long: Uracil-DNA glycosylase (217 aa).

The Proton acceptor role is filled by Asp62.

This sequence belongs to the uracil-DNA glycosylase (UDG) superfamily. UNG family.

It is found in the cytoplasm. It catalyses the reaction Hydrolyzes single-stranded DNA or mismatched double-stranded DNA and polynucleotides, releasing free uracil.. Its function is as follows. Excises uracil residues from the DNA which can arise as a result of misincorporation of dUMP residues by DNA polymerase or due to deamination of cytosine. The polypeptide is Uracil-DNA glycosylase (Streptococcus pyogenes serotype M1).